Reading from the N-terminus, the 70-residue chain is Beta-insect excitatory toxin LqqIT1 (70 aa).

One can recognise an LCN-type CS-alpha/beta domain in the interval 2–65 (KNGYAVDSSG…ISDARKKYCD (64 aa)). 4 disulfide bridges follow: Cys16/Cys37, Cys22/Cys42, Cys26/Cys44, and Cys38/Cys64.

It belongs to the long (4 C-C) scorpion toxin superfamily. Sodium channel inhibitor family. Beta subfamily. In terms of tissue distribution, expressed by the venom gland.

It is found in the secreted. Functionally, excitatory insect beta-toxins induce a spastic paralysis. They bind voltage-independently at site-4 of sodium channels (Nav) and shift the voltage of activation toward more negative potentials thereby affecting sodium channel activation and promoting spontaneous and repetitive firing. In vivo, this toxin induces a fast excitatory contraction paralysis on fly larvae. It is active only on insects. In Leiurus quinquestriatus quinquestriatus (Egyptian scorpion), this protein is Beta-insect excitatory toxin LqqIT1.